The primary structure comprises 343 residues: MPRDRAGTFTPRMLPKGTRRLTELDDMIISLYAGGMTVRDIQHHLATTLSMDMSPDTISTITDAVLEEVMIWQNRQLDEFYPVIFLDALRVKIRDGHRVVNKSCYMAVGVDMDGIKHILGLWIADNEGASFWASVCADLANRGVQDAFIVCCDGLKGLPEAVEATWPNSMVQTCIVHLIRAANRWVSYQDRKPVSSALREVYTAPTEDTARAALDAFEASELGRKYPQSVKVWRDAWDRFVPFLQFPPAARRVLYTTNSIESLNAELRKATRNRGQFPNDTAALKTLWLMICNIEDKRAAQRAKKAKRAIECNGYIEGAKATGWKQAINQLAVAYPDRFADYL.

The protein belongs to the transposase mutator family.

In terms of biological role, required for the transposition of the insertion element. The polypeptide is Probable transposase for insertion sequence element (Corynebacterium diphtheriae).